Here is a 312-residue protein sequence, read N- to C-terminus: Light-independent protochlorophyllide reductase iron-sulfur ATP-binding protein (312 aa).

Residues 55–60 (GIGKST) and lysine 84 contribute to the ATP site. Serine 59 is a Mg(2+) binding site. 2 residues coordinate [4Fe-4S] cluster: cysteine 140 and cysteine 174. ATP-binding positions include 225 to 226 (NR) and 249 to 251 (PDL).

It belongs to the NifH/BchL/ChlL family. Homodimer. Protochlorophyllide reductase is composed of three subunits; BchL, BchN and BchB. Requires [4Fe-4S] cluster as cofactor.

The enzyme catalyses chlorophyllide a + oxidized 2[4Fe-4S]-[ferredoxin] + 2 ADP + 2 phosphate = protochlorophyllide a + reduced 2[4Fe-4S]-[ferredoxin] + 2 ATP + 2 H2O. Its pathway is porphyrin-containing compound metabolism; bacteriochlorophyll biosynthesis (light-independent). Component of the dark-operative protochlorophyllide reductase (DPOR) that uses Mg-ATP and reduced ferredoxin to reduce ring D of protochlorophyllide (Pchlide) to form chlorophyllide a (Chlide). This reaction is light-independent. The L component serves as a unique electron donor to the NB-component of the complex, and binds Mg-ATP. The protein is Light-independent protochlorophyllide reductase iron-sulfur ATP-binding protein of Rhodopseudomonas palustris (strain HaA2).